A 180-amino-acid chain; its full sequence is GTP cyclohydrolase 1 (180 aa).

Cys-71, His-74, and Cys-142 together coordinate Zn(2+).

Belongs to the GTP cyclohydrolase I family. As to quaternary structure, homomer.

It carries out the reaction GTP + H2O = 7,8-dihydroneopterin 3'-triphosphate + formate + H(+). It participates in cofactor biosynthesis; 7,8-dihydroneopterin triphosphate biosynthesis; 7,8-dihydroneopterin triphosphate from GTP: step 1/1. The protein is GTP cyclohydrolase 1 of Helicobacter pylori (strain G27).